A 209-amino-acid polypeptide reads, in one-letter code: Large ribosomal subunit protein uL3 (209 aa).

The disordered stretch occupies residues 141 to 163 (RAVGSMGASSDPSRTFKNKRMPG).

The protein belongs to the universal ribosomal protein uL3 family. In terms of assembly, part of the 50S ribosomal subunit. Forms a cluster with proteins L14 and L19.

In terms of biological role, one of the primary rRNA binding proteins, it binds directly near the 3'-end of the 23S rRNA, where it nucleates assembly of the 50S subunit. This is Large ribosomal subunit protein uL3 from Clostridium botulinum (strain ATCC 19397 / Type A).